Consider the following 161-residue polypeptide: MNKTSKKHLALPYRPGVGMMILNADNKIFVGKRIDTKISAWQMPQGGIVPGETPSIAAMREMLEEIGSSKGYIIAESKCWYSYDVPSFLIPKLWDGNFRGQKQRWFLIRFTGTNEDININTLNPEFDEWRWASLDELLSIIIPFKRKLYQAVVKEFESLIQ.

One can recognise a Nudix hydrolase domain in the interval 12–154 (PYRPGVGMMI…KRKLYQAVVK (143 aa)). A Nudix box motif is present at residues 46–67 (GGIVPGETPSIAAMREMLEEIG).

It belongs to the Nudix hydrolase family. RppH subfamily. A divalent metal cation is required as a cofactor.

In terms of biological role, accelerates the degradation of transcripts by removing pyrophosphate from the 5'-end of triphosphorylated RNA, leading to a more labile monophosphorylated state that can stimulate subsequent ribonuclease cleavage. The sequence is that of RNA pyrophosphohydrolase from Rickettsia bellii (strain OSU 85-389).